We begin with the raw amino-acid sequence, 1173 residues long: 3-hydroxy-3-methylglutaryl coenzyme A reductase mlcD (1173 aa).

N-linked (GlcNAc...) asparagine glycans are attached at residues asparagine 143 and asparagine 186. The 180-residue stretch at 241 to 420 (DVVVMVLGYI…FTFYTAILSI (180 aa)) folds into the SSD domain. A run of 7 helical transmembrane segments spans residues 242-262 (VVVMVLGYISMHLTFVSLFLS), 272-292 (LATSVLLSSTFAFLLGLDVAI), 302-322 (LLSEGLPFLVVIVGFEKSITL), 368-388 (NIVCHYVVEILLLVIGAVLGI), 397-417 (VLAALILFFDCLLLFTFYTAI), 479-499 (FWMVVGFLIVNLVNIGSTLFQ), and 594-614 (VLSKWVFVALALSVALNSYLF). A linker region spans residues 498–673 (FQASSSGSLS…FTPTTTDSDS (176 aa)). Residues 647–666 (NQTPQIQSSLQAPQTRVFTP) are compositionally biased toward polar residues. The tract at residues 647-669 (NQTPQIQSSLQAPQTRVFTPTTT) is disordered. A catalytic region spans residues 674–1133 (DASLVLIKAS…LVKAHMAHNR (460 aa)). Glutamate 822 functions as the Charge relay system in the catalytic mechanism. Asparagine 886 carries N-linked (GlcNAc...) asparagine glycosylation. The Charge relay system role is filled by lysine 956. Asparagine 997 carries an N-linked (GlcNAc...) asparagine glycan. Residue aspartate 1032 is the Charge relay system of the active site. Residue histidine 1128 is the Proton donor of the active site. Residue asparagine 1132 is glycosylated (N-linked (GlcNAc...) asparagine). Residues 1132 to 1173 (NRSAPASSAPSRSVSPSGGTRTVPVPNNALRPSAAATDRARR) are disordered. Residues 1133–1148 (RSAPASSAPSRSVSPS) show a composition bias toward low complexity.

This sequence belongs to the HMG-CoA reductase family.

It localises to the endoplasmic reticulum membrane. The catalysed reaction is (R)-mevalonate + 2 NADP(+) + CoA = (3S)-3-hydroxy-3-methylglutaryl-CoA + 2 NADPH + 2 H(+). It functions in the pathway polyketide biosynthesis. In terms of biological role, HMG-CoA reductase; part of the gene cluster that mediates the biosynthesis of compactin, also known as mevastatin or ML-236B, and which acts as a potent competitive inhibitor of HMG-CoA reductase. Compactin biosynthesis is performed in two stages. The first stage is catalyzed by the nonaketide synthase mlcA, which belongs to type I polyketide synthases and catalyzes the iterative nine-step formation of the polyketide. This PKS stage is completed by the action of dehydrogenase mlcG, which catalyzes the NADPH-dependent reduction of the unsaturated tetra-, penta- and heptaketide intermediates that arise during the mlcA-mediated biosynthesis of the nonaketide chain and leads to dihydro-ML-236C carboxylate. Covalently bound dihydro-ML-236C carboxylate is released from mlcA by the mlcF esterase. Conversion of dihydro-ML-236C carboxylate into ML-236A carboxylate is subsequently performed with the participation of molecular oxygen and P450 monoogygenase mlcC. Finally, mlcH performs the conversion of ML-236A carboxylate to ML-236B/compactin carboxylate through the addition of the side-chain diketide moiety produced by the diketide synthase mlcB. HMG-CoA reductase mlcD may act as a down-regulator of compactin production and is involved in conferring resistance to ML-236B/compactin. The chain is 3-hydroxy-3-methylglutaryl coenzyme A reductase mlcD from Penicillium citrinum.